The following is a 291-amino-acid chain: Peptide methionine sulfoxide reductase MsrB/MsrA (291 aa).

The region spanning 1-124 (MLANLQHLSD…NSAALRFVAR (124 aa)) is the MsrB domain. Cysteine 113 functions as the Nucleophile in the catalytic mechanism. The segment at 127–284 (GTALFAAGCF…PGGYCHVSLH (158 aa)) is peptide methionine sulfoxide reductase A. Residue cysteine 135 is part of the active site.

This sequence in the N-terminal section; belongs to the MsrB Met sulfoxide reductase family. In the C-terminal section; belongs to the MsrA Met sulfoxide reductase family.

The catalysed reaction is L-methionyl-[protein] + [thioredoxin]-disulfide + H2O = L-methionyl-(R)-S-oxide-[protein] + [thioredoxin]-dithiol. It catalyses the reaction L-methionyl-[protein] + [thioredoxin]-disulfide + H2O = L-methionyl-(S)-S-oxide-[protein] + [thioredoxin]-dithiol. It carries out the reaction [thioredoxin]-disulfide + L-methionine + H2O = L-methionine (S)-S-oxide + [thioredoxin]-dithiol. Its function is as follows. Has an important function as a repair enzyme for proteins that have been inactivated by oxidation. Catalyzes the reversible oxidation-reduction of methionine sulfoxide in proteins to methionine. The protein is Peptide methionine sulfoxide reductase MsrB/MsrA (msrAB) of Treponema pallidum (strain Nichols).